A 102-amino-acid chain; its full sequence is Protein CASC2, isoform 3 (102 aa).

As to expression, expressed in normal and neoplastic endometrial tissues.

May act as a potential tumor suppressor. The chain is Protein CASC2, isoform 3 (CASC2) from Homo sapiens (Human).